The chain runs to 187 residues: Calcium and integrin-binding family member 2 (187 aa).

3 consecutive EF-hand domains span residues K66 to M101, P103 to E138, and E144 to F179. Ca(2+) contacts are provided by D157, D159, D161, K163, and D168.

In terms of assembly, monomer. Homodimer. In terms of tissue distribution, enriched in central and striolar hair cells.

It localises to the cytoplasm. It is found in the cell projection. The protein resides in the stereocilium. Its subcellular location is the photoreceptor inner segment. The protein localises to the cilium. It localises to the photoreceptor outer segment. It is found in the cell membrane. The protein resides in the sarcolemma. In terms of biological role, calcium- and integrin-binding protein. Plays a role in intracellular calcium homeostasis. Critical for proper photoreceptor cell maintenance and function. Essential for development, maintenance and function of mechanosensory hair cells. In Danio rerio (Zebrafish), this protein is Calcium and integrin-binding family member 2.